Consider the following 109-residue polypeptide: MCNLLVAEQCCRICELRNGWYTENYTESVPTTLANNAFYGSVENGKISSALRAELAEAAADYAVALVQVGLGEGFAGLIAQWDMDTSNGALTCCLKRVWYLVIKNLHLS.

To E.coli YtfG C-terminal region.

This is an uncharacterized protein from Haemophilus influenzae (strain ATCC 51907 / DSM 11121 / KW20 / Rd).